The following is a 457-amino-acid chain: Tubulin beta chain (457 aa).

GTP is bound by residues Gln-11, Glu-69, Ser-138, Gly-142, Thr-143, Gly-144, Asn-204, and Asn-226. Glu-69 contacts Mg(2+). The segment at 431–457 is disordered; it reads EGEEEEDAYAEGAVVNGDQSYEDQYAA.

Belongs to the tubulin family. In terms of assembly, dimer of alpha and beta chains. A typical microtubule is a hollow water-filled tube with an outer diameter of 25 nm and an inner diameter of 15 nM. Alpha-beta heterodimers associate head-to-tail to form protofilaments running lengthwise along the microtubule wall with the beta-tubulin subunit facing the microtubule plus end conferring a structural polarity. Microtubules usually have 13 protofilaments but different protofilament numbers can be found in some organisms and specialized cells. Requires Mg(2+) as cofactor.

The protein resides in the cytoplasm. It is found in the cytoskeleton. Its function is as follows. Tubulin is the major constituent of microtubules, a cylinder consisting of laterally associated linear protofilaments composed of alpha- and beta-tubulin heterodimers. Microtubules grow by the addition of GTP-tubulin dimers to the microtubule end, where a stabilizing cap forms. Below the cap, tubulin dimers are in GDP-bound state, owing to GTPase activity of alpha-tubulin. The polypeptide is Tubulin beta chain (TUBB1) (Porphyra purpurea (Red seaweed)).